The primary structure comprises 551 residues: Arginine--tRNA ligase (551 aa).

Residues 125–135 carry the 'HIGH' region motif; it reads ANPTGPLHIGH.

The protein belongs to the class-I aminoacyl-tRNA synthetase family. Monomer.

The protein resides in the cytoplasm. The catalysed reaction is tRNA(Arg) + L-arginine + ATP = L-arginyl-tRNA(Arg) + AMP + diphosphate. This is Arginine--tRNA ligase from Nitratidesulfovibrio vulgaris (strain DP4) (Desulfovibrio vulgaris).